The following is a 171-amino-acid chain: Ribosome maturation factor RimM (171 aa).

The PRC barrel domain occupies 97 to 170 (EGEYYYHEII…LVTIHVMEGL (74 aa)).

It belongs to the RimM family. In terms of assembly, binds ribosomal protein uS19.

The protein localises to the cytoplasm. Functionally, an accessory protein needed during the final step in the assembly of 30S ribosomal subunit, possibly for assembly of the head region. Essential for efficient processing of 16S rRNA. May be needed both before and after RbfA during the maturation of 16S rRNA. It has affinity for free ribosomal 30S subunits but not for 70S ribosomes. This is Ribosome maturation factor RimM from Bacillus thuringiensis (strain Al Hakam).